The chain runs to 452 residues: General transcription and DNA repair factor IIH subunit TFB2 (452 aa).

The protein belongs to the TFB2 family. Component of the 7-subunit TFIIH core complex composed of XPB, XPD, TFB1/GTF2H1, GTF2H2/P44, TFB4/GTF2H3, TFB2/GTF2H4 and TFB5/GTF2H5, which is active in NER. The core complex associates with the 3-subunit CDK-activating kinase (CAK) module composed of CYCH1/cyclin H1, CDKD and MAT1/At4g30820 to form the 10-subunit holoenzyme (holo-TFIIH) active in transcription.

It is found in the nucleus. Component of the general transcription and DNA repair factor IIH (TFIIH) core complex, which is involved in general and transcription-coupled nucleotide excision repair (NER) of damaged DNA and, when complexed to CAK, in RNA transcription by RNA polymerase II. In NER, TFIIH acts by opening DNA around the lesion to allow the excision of the damaged oligonucleotide and its replacement by a new DNA fragment. In transcription, TFIIH has an essential role in transcription initiation. When the pre-initiation complex (PIC) has been established, TFIIH is required for promoter opening and promoter escape. Phosphorylation of the C-terminal tail (CTD) of the largest subunit of RNA polymerase II by the kinase module CAK controls the initiation of transcription. The chain is General transcription and DNA repair factor IIH subunit TFB2 from Arabidopsis thaliana (Mouse-ear cress).